The sequence spans 96 residues: MRKYEIMYIIRPGVEEEAQKALVERFAGVLTNNGAEIINTKEWGKRRLAYEINDLREGFYMILNVKSNAEAINEFDRLAKINEDILRHIVVKEEEK.

This sequence belongs to the bacterial ribosomal protein bS6 family.

Its function is as follows. Binds together with bS18 to 16S ribosomal RNA. This chain is Small ribosomal subunit protein bS6, found in Bacillus cereus (strain ATCC 10987 / NRS 248).